The sequence spans 335 residues: Tetraacyldisaccharide 4'-kinase (335 aa).

Position 51–58 (51–58 (HVGGAGKT)) interacts with ATP.

It belongs to the LpxK family.

The enzyme catalyses a lipid A disaccharide + ATP = a lipid IVA + ADP + H(+). It functions in the pathway glycolipid biosynthesis; lipid IV(A) biosynthesis; lipid IV(A) from (3R)-3-hydroxytetradecanoyl-[acyl-carrier-protein] and UDP-N-acetyl-alpha-D-glucosamine: step 6/6. Transfers the gamma-phosphate of ATP to the 4'-position of a tetraacyldisaccharide 1-phosphate intermediate (termed DS-1-P) to form tetraacyldisaccharide 1,4'-bis-phosphate (lipid IVA). The polypeptide is Tetraacyldisaccharide 4'-kinase (Bradyrhizobium sp. (strain ORS 278)).